We begin with the raw amino-acid sequence, 92 residues long: Small ribosomal subunit protein uS19 (92 aa).

The protein belongs to the universal ribosomal protein uS19 family.

Functionally, protein S19 forms a complex with S13 that binds strongly to the 16S ribosomal RNA. In Jannaschia sp. (strain CCS1), this protein is Small ribosomal subunit protein uS19.